A 35-amino-acid polypeptide reads, in one-letter code: Photosystem II reaction center protein T (35 aa).

The chain crosses the membrane as a helical span at residues 3 to 23 (AFAYTLLMTLVVATLFFAVAF).

It belongs to the PsbT family. In terms of assembly, PSII is composed of 1 copy each of membrane proteins PsbA, PsbB, PsbC, PsbD, PsbE, PsbF, PsbH, PsbI, PsbJ, PsbK, PsbL, PsbM, PsbT, PsbX, PsbY, Psb30/Ycf12, peripheral proteins PsbO, CyanoQ (PsbQ), PsbU, PsbV and a large number of cofactors. It forms dimeric complexes.

The protein resides in the cellular thylakoid membrane. Functionally, found at the monomer-monomer interface of the photosystem II (PS II) dimer, plays a role in assembly and dimerization of PSII. PSII is a light-driven water plastoquinone oxidoreductase, using light energy to abstract electrons from H(2)O, generating a proton gradient subsequently used for ATP formation. This is Photosystem II reaction center protein T from Prochlorococcus marinus (strain MIT 9303).